The primary structure comprises 327 residues: Phenylalanine--tRNA ligase alpha subunit (327 aa).

Glutamate 252 is a Mg(2+) binding site.

This sequence belongs to the class-II aminoacyl-tRNA synthetase family. Phe-tRNA synthetase alpha subunit type 1 subfamily. Tetramer of two alpha and two beta subunits. The cofactor is Mg(2+).

The protein localises to the cytoplasm. The enzyme catalyses tRNA(Phe) + L-phenylalanine + ATP = L-phenylalanyl-tRNA(Phe) + AMP + diphosphate + H(+). This chain is Phenylalanine--tRNA ligase alpha subunit, found in Shewanella amazonensis (strain ATCC BAA-1098 / SB2B).